The chain runs to 214 residues: Coiled-coil domain-containing protein 169 (214 aa).

A coiled-coil region spans residues 56–138 (SEWKTRYETQ…YAFRLEQESK (83 aa)). The interval 154–214 (MTQVSGSNQV…RSNHLPKLNP (61 aa)) is disordered. 2 stretches are compositionally biased toward polar residues: residues 155-166 (TQVSGSNQVSKR) and 185-195 (HNSMNQKTTNA).

It belongs to the CCDC169 family.

The polypeptide is Coiled-coil domain-containing protein 169 (Ccdc169) (Mus musculus (Mouse)).